We begin with the raw amino-acid sequence, 147 residues long: Large ribosomal subunit protein uL15 (147 aa).

The span at 1–13 (MELHSLKAAEGSR) shows a compositional bias: basic and acidic residues. A disordered region spans residues 1–57 (MELHSLKAAEGSRKVRNRVGRGTSSGNGKTSGRGQKGQKSRSGGGVRPGFEGGQTEL). 2 stretches are compositionally biased toward gly residues: residues 23-35 (TSSGNGKTSGRGQ) and 42-52 (SGGGVRPGFEG).

It belongs to the universal ribosomal protein uL15 family. Part of the 50S ribosomal subunit.

Its function is as follows. Binds to the 23S rRNA. This is Large ribosomal subunit protein uL15 from Lactococcus lactis subsp. lactis (strain IL1403) (Streptococcus lactis).